The chain runs to 607 residues: Chaperone protein HtpG (607 aa).

The segment at M1–R323 is a; substrate-binding. The segment at E324–K534 is b. Positions T535 to K607 are c.

Belongs to the heat shock protein 90 family. Homodimer.

The protein localises to the cytoplasm. Functionally, molecular chaperone. Has ATPase activity. This is Chaperone protein HtpG from Fusobacterium nucleatum subsp. nucleatum (strain ATCC 25586 / DSM 15643 / BCRC 10681 / CIP 101130 / JCM 8532 / KCTC 2640 / LMG 13131 / VPI 4355).